We begin with the raw amino-acid sequence, 84 residues long: Large ribosomal subunit protein bL31B (84 aa).

Belongs to the bacterial ribosomal protein bL31 family. Type B subfamily. Part of the 50S ribosomal subunit.

The polypeptide is Large ribosomal subunit protein bL31B (Rhodococcus erythropolis (strain PR4 / NBRC 100887)).